Here is a 143-residue protein sequence, read N- to C-terminus: Putative transmembrane protein ORF32 (143 aa).

A run of 2 helical transmembrane segments spans residues 20–42 (GISGMLRLAMLGLTGVSTMSFTL) and 52–74 (WPLIGAMCVGTLLFAYYYTEGGV).

Its subcellular location is the host membrane. This chain is Putative transmembrane protein ORF32, found in Haloarcula hispanica (His1V).